The primary structure comprises 294 residues: Universal stress protein MSMEG_3950/MSMEI_3859 (294 aa).

G13 provides a ligand contact to ATP. An Isoglutamyl lysine isopeptide (Lys-Gln) (interchain with Q-Cter in protein Pup) cross-link involves residue K109. ATP contacts are provided by residues 117–123, 131–132, G164, D197, 261–267, and 275–277; these read GNRGMGA, ST, GSHGRGG, and SVS.

The protein belongs to the universal stress protein A family.

This chain is Universal stress protein MSMEG_3950/MSMEI_3859, found in Mycolicibacterium smegmatis (strain ATCC 700084 / mc(2)155) (Mycobacterium smegmatis).